Consider the following 130-residue polypeptide: C-type natriuretic peptide 2 (130 aa).

A signal peptide spans 1–22; the sequence is MAASSSSFVPLVLLFLAIPVEP. Positions 23–103 are excised as a propeptide; it reads RPSMTRDEAQ…LQQQSKTTRR (81 aa). Residues 57–77 form a disordered region; the sequence is ELLPRRPGPPRSFGASPGALR. Cys114 and Cys130 are disulfide-bonded.

The protein belongs to the natriuretic peptide family.

It localises to the secreted. Its function is as follows. Exhibits natriuretic and vasodepressant activity. Has cGMP-stimulating activity. May help to regulate body fluid homeostasis in a variety of aquatic environments. This is C-type natriuretic peptide 2 from Takifugu rubripes (Japanese pufferfish).